The following is a 208-amino-acid chain: Uracil phosphoribosyltransferase (208 aa).

5-phospho-alpha-D-ribose 1-diphosphate is bound by residues Arg78, Arg103, and 130 to 138 (DPMLATGGS). Residues Ile193 and 198 to 200 (GDA) contribute to the uracil site. Asp199 contacts 5-phospho-alpha-D-ribose 1-diphosphate.

It belongs to the UPRTase family. Mg(2+) is required as a cofactor.

It catalyses the reaction UMP + diphosphate = 5-phospho-alpha-D-ribose 1-diphosphate + uracil. The protein operates within pyrimidine metabolism; UMP biosynthesis via salvage pathway; UMP from uracil: step 1/1. With respect to regulation, allosterically activated by GTP. Catalyzes the conversion of uracil and 5-phospho-alpha-D-ribose 1-diphosphate (PRPP) to UMP and diphosphate. This Shewanella denitrificans (strain OS217 / ATCC BAA-1090 / DSM 15013) protein is Uracil phosphoribosyltransferase.